The following is a 567-amino-acid chain: DNA ligase (567 aa).

Glu260 is a binding site for ATP. Lys262 (N6-AMP-lysine intermediate) is an active-site residue. 6 residues coordinate ATP: Arg267, Arg282, Glu312, Phe352, Arg427, and Lys433.

This sequence belongs to the ATP-dependent DNA ligase family. Mg(2+) serves as cofactor.

The catalysed reaction is ATP + (deoxyribonucleotide)n-3'-hydroxyl + 5'-phospho-(deoxyribonucleotide)m = (deoxyribonucleotide)n+m + AMP + diphosphate.. In terms of biological role, DNA ligase that seals nicks in double-stranded DNA during DNA replication, DNA recombination and DNA repair. The protein is DNA ligase of Methanococcoides burtonii (strain DSM 6242 / NBRC 107633 / OCM 468 / ACE-M).